Reading from the N-terminus, the 316-residue chain is Endochitinase WIN8 (316 aa).

The N-terminal stretch at 1-23 is a signal peptide; it reads MRFWALTVLSLLLSLLLGVSSDT. Positions 24–64 constitute a Chitin-binding type-1 domain; that stretch reads AQCGSQAGNATCPNDLCCSSGGYCGLTVAYCCAGCVSQCRN. Disulfide bonds link C26-C41, C35-C47, C40-C54, C58-C62, C84-C146, C158-C168, and C266-C298. Catalysis depends on E128, which acts as the Proton donor.

This sequence belongs to the glycosyl hydrolase 19 family. Chitinase class I subfamily.

It carries out the reaction Random endo-hydrolysis of N-acetyl-beta-D-glucosaminide (1-&gt;4)-beta-linkages in chitin and chitodextrins.. In terms of biological role, defense against chitin-containing fungal pathogens. This Populus trichocarpa (Western balsam poplar) protein is Endochitinase WIN8 (WIN8).